The primary structure comprises 235 residues: Glycerol uptake facilitator protein 2 (235 aa).

A run of 6 helical transmembrane segments spans residues 4–24, 39–59, 62–82, 83–103, 134–154, and 165–185; these read FLGE…SGAA, FICL…GQFG, GHLN…PMAN, VWPY…IVII, VFNF…LLNL, and MVGL…GFAI. Residues 65-67 carry the NPA 1 motif; sequence NPA. The short motif at 186 to 188 is the NPA 2 element; sequence NPA. A helical transmembrane segment spans residues 210-230; sequence WGYAWVPMFGPLLGGILAAGL.

Belongs to the MIP/aquaporin (TC 1.A.8) family.

The protein resides in the cell membrane. Its function is as follows. Transporter that facilitates the transmembrane diffusion of water, dihydroxyacetone, glycerol and H(2)O(2). Is not permeable to urea and D/L-lactic acid. This Lactiplantibacillus plantarum (strain ATCC BAA-793 / NCIMB 8826 / WCFS1) (Lactobacillus plantarum) protein is Glycerol uptake facilitator protein 2.